We begin with the raw amino-acid sequence, 377 residues long: Alanine racemase, catabolic (377 aa).

The active-site Proton acceptor; specific for D-alanine is K51. An N6-(pyridoxal phosphate)lysine modification is found at K51. R150 is a binding site for substrate. Catalysis depends on Y272, which acts as the Proton acceptor; specific for L-alanine. A substrate-binding site is contributed by M320.

It belongs to the alanine racemase family. The cofactor is pyridoxal 5'-phosphate.

The enzyme catalyses L-alanine = D-alanine. Its function is as follows. Isomerizes L-alanine to D-alanine which is then oxidized to pyruvate by DadA. In Rhizobium johnstonii (strain DSM 114642 / LMG 32736 / 3841) (Rhizobium leguminosarum bv. viciae), this protein is Alanine racemase, catabolic (dadX).